The chain runs to 198 residues: Probable GTP-binding protein EngB (198 aa).

An EngB-type G domain is found at N21–G195. GTP is bound by residues G29–S36, G56–L60, D81–G84, T151–D154, and V174–N176. Mg(2+)-binding residues include S36 and T58.

This sequence belongs to the TRAFAC class TrmE-Era-EngA-EngB-Septin-like GTPase superfamily. EngB GTPase family. Mg(2+) is required as a cofactor.

Necessary for normal cell division and for the maintenance of normal septation. The protein is Probable GTP-binding protein EngB of Campylobacter jejuni subsp. jejuni serotype O:6 (strain 81116 / NCTC 11828).